The sequence spans 769 residues: Serine/threonine-protein kinase PLK4 (769 aa).

In terms of domain architecture, Protein kinase spans 14–267; sequence YEVQHLLGKG…LEAVLCHPFM (254 aa). ATP contacts are provided by residues 20–28 and K43; that span reads LGKGGFATV. D138 serves as the catalytic Proton acceptor. The region spanning 381–498 is the Cryptic POLO box 1 (CPB1) domain; sequence EDRISVPPLN…ARFVGLVKSK (118 aa). In terms of domain architecture, Cryptic POLO box 2 (CPB2) spans 499–602; sequence TPKVTYFSTL…GRRPITDVQP (104 aa). The POLO box domain occupies 660-739; sequence PIKRINVPDI…IPNIQLKLKT (80 aa).

The protein belongs to the protein kinase superfamily. Ser/Thr protein kinase family. CDC5/Polo subfamily. In terms of assembly, homodimer. Ubiquitinated by the SCF(Slimb) ubiquitin ligase complex; leading to its degradation by the proteasome during interphase and regulating centriole number and ensuring the block to centriole reduplication.

The protein resides in the cytoplasm. The protein localises to the cytoskeleton. It localises to the microtubule organizing center. It is found in the centrosome. Its subcellular location is the centriole. It carries out the reaction L-seryl-[protein] + ATP = O-phospho-L-seryl-[protein] + ADP + H(+). The enzyme catalyses L-threonyl-[protein] + ATP = O-phospho-L-threonyl-[protein] + ADP + H(+). Serine/threonine-protein kinase that plays a central role in centriole duplication. Able to trigger procentriole formation on the surface of the mother centriole cylinder, using mother centriole as a platform, leading to the recruitment of centriole biogenesis proteins such as sas-6. When overexpressed, it is able to induce centrosome amplification through the simultaneous generation of multiple procentrioles adjoining each parental centriole during S phase. Centrosome amplification following overexpression can initiate tumorigenesis, highlighting the importance of centrosome regulation in cancers. The polypeptide is Serine/threonine-protein kinase PLK4 (SAK) (Drosophila sechellia (Fruit fly)).